Reading from the N-terminus, the 252-residue chain is Chitooligosaccharide deacetylase (252 aa).

H61 and H125 together coordinate Mg(2+).

This sequence belongs to the YdjC deacetylase family. ChbG subfamily. In terms of assembly, homodimer. The cofactor is Mg(2+).

The protein resides in the cytoplasm. The enzyme catalyses N,N'-diacetylchitobiose + H2O = N-acetyl-beta-D-glucosaminyl-(1-&gt;4)-D-glucosamine + acetate. It carries out the reaction diacetylchitobiose-6'-phosphate + H2O = N'-monoacetylchitobiose-6'-phosphate + acetate. Its pathway is glycan degradation; chitin degradation. Its function is as follows. Involved in the degradation of chitin. ChbG is essential for growth on the acetylated chitooligosaccharides chitobiose and chitotriose but is dispensable for growth on cellobiose and chitosan dimer, the deacetylated form of chitobiose. Deacetylation of chitobiose-6-P and chitotriose-6-P is necessary for both the activation of the chb promoter by the regulatory protein ChbR and the hydrolysis of phosphorylated beta-glucosides by the phospho-beta-glucosidase ChbF. Catalyzes the removal of only one acetyl group from chitobiose-6-P to yield monoacetylchitobiose-6-P, the inducer of ChbR and the substrate of ChbF. The sequence is that of Chitooligosaccharide deacetylase from Salmonella paratyphi A (strain ATCC 9150 / SARB42).